A 202-amino-acid chain; its full sequence is Glycerol-3-phosphate acyltransferase (202 aa).

The next 6 helical transmembrane spans lie at methionine 2–isoleucine 22, phenylalanine 54–phenylalanine 74, phenylalanine 85–phenylalanine 105, alanine 118–leucine 138, leucine 140–glycine 160, and leucine 162–phenylalanine 182.

Belongs to the PlsY family. Probably interacts with PlsX.

The protein resides in the cell membrane. The catalysed reaction is an acyl phosphate + sn-glycerol 3-phosphate = a 1-acyl-sn-glycero-3-phosphate + phosphate. It participates in lipid metabolism; phospholipid metabolism. In terms of biological role, catalyzes the transfer of an acyl group from acyl-phosphate (acyl-PO(4)) to glycerol-3-phosphate (G3P) to form lysophosphatidic acid (LPA). This enzyme utilizes acyl-phosphate as fatty acyl donor, but not acyl-CoA or acyl-ACP. In Staphylococcus carnosus (strain TM300), this protein is Glycerol-3-phosphate acyltransferase.